The primary structure comprises 330 residues: DNA-directed RNA polymerase subunit alpha (330 aa).

An alpha N-terminal domain (alpha-NTD) region spans residues 1–232 (MAILAFQKPD…YHFMLFSDEK (232 aa)). An alpha C-terminal domain (alpha-CTD) region spans residues 248 to 330 (EEVLHMRQLL…DISKYKLDKE (83 aa)).

The protein belongs to the RNA polymerase alpha chain family. In terms of assembly, homodimer. The RNAP catalytic core consists of 2 alpha, 1 beta, 1 beta' and 1 omega subunit. When a sigma factor is associated with the core the holoenzyme is formed, which can initiate transcription.

The catalysed reaction is RNA(n) + a ribonucleoside 5'-triphosphate = RNA(n+1) + diphosphate. In terms of biological role, DNA-dependent RNA polymerase catalyzes the transcription of DNA into RNA using the four ribonucleoside triphosphates as substrates. This chain is DNA-directed RNA polymerase subunit alpha, found in Bacteroides thetaiotaomicron (strain ATCC 29148 / DSM 2079 / JCM 5827 / CCUG 10774 / NCTC 10582 / VPI-5482 / E50).